The sequence spans 270 residues: MELSSASAILSHSSSAAQLLRPKLGFIDLLPRRAMIVSSPSSSLPRFLRMESQSQLRQSISCSASSSSSMALGRIGEVKRVTKETNVSVKINLDGTGVADSSSGIPFLDHMLDQLASHGLFDVHVRATGDVHIDDHHTNEDIALAIGTALLKALGERKGINRFGDFTAPLDEALIHVSLDLSGRPYLGYNLEIPTQRVGTYDTQLVEHFFQSLVNTSGMTLHIRQLAGENSHHIIEATFKAFARALRQATETDPRRGGTIPSSKGVLSRS.

A chloroplast-targeting transit peptide spans 1-62; sequence MELSSASAIL…QSQLRQSISC (62 aa). Ser63 is subject to N-acetylserine. Residues Glu84, 110–118, 136–140, Arg162, and Arg184 contribute to the substrate site; these read HMLDQLASH and HHTNE. Mn(2+) contacts are provided by His110, His136, His137, and Glu140. Mn(2+) contacts are provided by His208, His232, His233, and Glu236. Substrate-binding positions include 232–240 and 262–264; these read HHIIEATFK and SSK. A disordered region spans residues 250 to 270; the sequence is TETDPRRGGTIPSSKGVLSRS.

The protein belongs to the imidazoleglycerol-phosphate dehydratase family. Mn(2+) is required as a cofactor.

It is found in the plastid. The protein localises to the chloroplast. It carries out the reaction D-erythro-1-(imidazol-4-yl)glycerol 3-phosphate = 3-(imidazol-4-yl)-2-oxopropyl phosphate + H2O. Its pathway is amino-acid biosynthesis; L-histidine biosynthesis; L-histidine from 5-phospho-alpha-D-ribose 1-diphosphate: step 6/9. The chain is Imidazoleglycerol-phosphate dehydratase 1, chloroplastic from Arabidopsis thaliana (Mouse-ear cress).